A 508-amino-acid polypeptide reads, in one-letter code: Histone acetyltransferase type B catalytic subunit (508 aa).

Interaction with histone H4 N-terminus stretches follow at residues 44-46 (EKE) and 207-209 (YRY). Acetyl-CoA is bound by residues 249–251 (FII) and 256–262 (QQKGLGS). The Proton donor/acceptor role is filled by Glu-284. 2 disordered regions span residues 364–399 (SVRP…PTPE) and 461–508 (QADG…SGHA). Residues 387 to 399 (KGHEKALPKPTPE) show a composition bias toward basic and acidic residues.

Belongs to the HAT1 family. In terms of assembly, component of the HAT-B complex composed of at least hat-1 and hat-2. The HAT-B complex binds to histone H4 tail.

Its subcellular location is the cytoplasm. It is found in the nucleus. The enzyme catalyses L-lysyl-[protein] + acetyl-CoA = N(6)-acetyl-L-lysyl-[protein] + CoA + H(+). In terms of biological role, catalytic component of the histone acetylase B (HAT-B) complex. Acetylates 'Lys-12' of histone H4 which is required for telomeric silencing. Has intrinsic substrate specificity that modifies lysine in recognition sequence GXGKXG. Involved in DNA double-strand break repair. The sequence is that of Histone acetyltransferase type B catalytic subunit (hat-1) from Neurospora crassa (strain ATCC 24698 / 74-OR23-1A / CBS 708.71 / DSM 1257 / FGSC 987).